A 145-amino-acid chain; its full sequence is RING-H2 finger protein ATL18 (145 aa).

The N-terminal stretch at 1-29 is a signal peptide; sequence MISMLFPRSPLCTAAIVFYTCVCIPLGRL. The segment at 62 to 105 adopts an RING-type; atypical zinc-finger fold; the sequence is CPICLVEFEAEDAVTHLPRCAHLFHINCIEPWLLRGHLTCPLCR. Residues 125–145 traverse the membrane as a helical segment; it reads STLYLSIFFFFCIFLHLLGYL.

The protein belongs to the RING-type zinc finger family. ATL subfamily.

Its subcellular location is the membrane. The enzyme catalyses S-ubiquitinyl-[E2 ubiquitin-conjugating enzyme]-L-cysteine + [acceptor protein]-L-lysine = [E2 ubiquitin-conjugating enzyme]-L-cysteine + N(6)-ubiquitinyl-[acceptor protein]-L-lysine.. It functions in the pathway protein modification; protein ubiquitination. The protein is RING-H2 finger protein ATL18 (ATL18) of Arabidopsis thaliana (Mouse-ear cress).